A 262-amino-acid polypeptide reads, in one-letter code: Probable cutinase 1 (262 aa).

The N-terminal stretch at 1–19 (MAPLKSLLLGASLATLALS) is a signal peptide. Disulfide bonds link Cys-48-Cys-127 and Cys-74-Cys-88. Residue Ser-138 is the Nucleophile of the active site. The cysteines at positions 189 and 196 are disulfide-linked. Residue Asp-193 is part of the active site. Residue His-206 is the Proton donor/acceptor of the active site. The segment at 228–262 (SSSTTSSSSDAASSSSAAGTSSSGLSGLSSFFGGL) is disordered.

The protein belongs to the cutinase family.

It is found in the secreted. It carries out the reaction cutin + H2O = cutin monomers.. Its function is as follows. Catalyzes the hydrolysis of complex carboxylic polyesters found in the cell wall of plants. Degrades cutin, a macromolecule that forms the structure of the plant cuticle. In Aspergillus niger (strain ATCC MYA-4892 / CBS 513.88 / FGSC A1513), this protein is Probable cutinase 1.